A 315-amino-acid chain; its full sequence is Olfactory receptor 10H2 (315 aa).

Residues 1–25 (MLGLNHTSMSEFILVGFSAFPHLQL) are Extracellular-facing. Residue asparagine 5 is glycosylated (N-linked (GlcNAc...) asparagine). Residues 26-46 (MLFLLFLLMYLFTLLGNLLIM) traverse the membrane as a helical segment. Residues 47-54 (ATVWSERS) are Cytoplasmic-facing. The helical transmembrane segment at 55–75 (LHTPMYLFLCVLSVSEILYTV) threads the bilayer. Over 76–99 (AIIPRMLADLLSTQRSIAFLACAS) the chain is Extracellular. A disulfide bond links cysteine 97 and cysteine 189. A helical transmembrane segment spans residues 100 to 120 (QMFFSFSFGFTHSFLLTVMGY). Over 121–139 (DRYVAICHPLRYNVLMSPR) the chain is Cytoplasmic. The helical transmembrane segment at 140 to 160 (GCACLVGCSWAGGSVMGMVVT) threads the bilayer. The Extracellular portion of the chain corresponds to 161 to 197 (SAIFQLTFCGSHEIQHFLCHVPPLLKLACGNNVPAVA). A helical transmembrane segment spans residues 198 to 218 (LGVGLVCIMALLGCFLLILLS). Residues 219-238 (YAFIVADILKIPSAEGRNKA) lie on the Cytoplasmic side of the membrane. Residues 239 to 259 (FSTCASHLIVVIVHYGFASVI) form a helical membrane-spanning segment. Residues 260–272 (YLKPKGPHSQEGD) lie on the Extracellular side of the membrane. Residues 273–293 (TLMATTYAVLTPFLSPIIFSL) traverse the membrane as a helical segment. Residues 294-315 (RNKELKVAMKRTFLSTLYSSGT) are Cytoplasmic-facing.

The protein belongs to the G-protein coupled receptor 1 family.

It localises to the cell membrane. In terms of biological role, odorant receptor. The polypeptide is Olfactory receptor 10H2 (OR10H2) (Homo sapiens (Human)).